Reading from the N-terminus, the 359-residue chain is Halocin-H4 (359 aa).

Residues 1-46 form the signal peptide; that stretch reads MSKDRDGRRTSRRGTLKKIGGFSLGALSFGAVGRTQAATGSSVTTA. 2 disordered regions span residues 40 to 59 and 340 to 359; these read GSSVTTADIAPPGPNGDPKS and IPDRIYEEIEQKKKQRSRKQ.

The protein localises to the secreted. Its function is as follows. Has antibacterial activity against other haloarchaeons. Interacts with the membrane of the target cells where it causes permeability changes that result in an ionic imbalance leading to cell lysis and death. This Haloferax mediterranei (strain ATCC 33500 / DSM 1411 / JCM 8866 / NBRC 14739 / NCIMB 2177 / R-4) (Halobacterium mediterranei) protein is Halocin-H4 (halH4).